The following is a 200-amino-acid chain: Imidazole glycerol phosphate synthase subunit HisH (200 aa).

One can recognise a Glutamine amidotransferase type-1 domain in the interval 3–200 (DVALIDAGGA…LRNFLEMSFP (198 aa)). Cys-78 acts as the Nucleophile in catalysis. Residues His-179 and Glu-181 contribute to the active site.

In terms of assembly, heterodimer of HisH and HisF.

The protein resides in the cytoplasm. The catalysed reaction is 5-[(5-phospho-1-deoxy-D-ribulos-1-ylimino)methylamino]-1-(5-phospho-beta-D-ribosyl)imidazole-4-carboxamide + L-glutamine = D-erythro-1-(imidazol-4-yl)glycerol 3-phosphate + 5-amino-1-(5-phospho-beta-D-ribosyl)imidazole-4-carboxamide + L-glutamate + H(+). It catalyses the reaction L-glutamine + H2O = L-glutamate + NH4(+). Its pathway is amino-acid biosynthesis; L-histidine biosynthesis; L-histidine from 5-phospho-alpha-D-ribose 1-diphosphate: step 5/9. In terms of biological role, IGPS catalyzes the conversion of PRFAR and glutamine to IGP, AICAR and glutamate. The HisH subunit catalyzes the hydrolysis of glutamine to glutamate and ammonia as part of the synthesis of IGP and AICAR. The resulting ammonia molecule is channeled to the active site of HisF. The chain is Imidazole glycerol phosphate synthase subunit HisH from Xanthomonas euvesicatoria pv. vesicatoria (strain 85-10) (Xanthomonas campestris pv. vesicatoria).